The sequence spans 596 residues: Inactive metallocarboxypeptidase ECM14 (596 aa).

The first 22 residues, 1-22 (MHFSVRLSLFLTLASSLPLVSA), serve as a signal peptide directing secretion. Positions 23 to 184 (VPQHEDQAYT…QTIYESYPKA (162 aa)) are excised as a propeptide. Residues 182 to 211 (PKAGSASPSQQGPTTRRFSPSASTSKSKPH) form a disordered region. Polar residues predominate over residues 187–207 (ASPSQQGPTTRRFSPSASTSK). The Peptidase M14 domain occupies 220–546 (DYQPLSVLLP…RAMVAMGKFL (327 aa)). Residues histidine 285 and glutamate 288 each coordinate Zn(2+). Substrate is bound by residues 285–288 (HARE), arginine 343, and 360–361 (DH). An intrachain disulfide couples cysteine 354 to cysteine 377. N-linked (GlcNAc...) asparagine glycosylation occurs at asparagine 370. Zn(2+) is bound at residue histidine 417. 418 to 419 (SY) lines the substrate pocket. The segment at 557–596 (DGLRASEEPQDYDNDLEDGEDDKDEQGSTVFRAQADDLQS) is disordered. Positions 564-580 (EPQDYDNDLEDGEDDKD) are enriched in acidic residues. Residues 583 to 596 (GSTVFRAQADDLQS) are compositionally biased toward polar residues.

This sequence belongs to the peptidase M14 family. The cofactor is Zn(2+).

Its subcellular location is the vacuole. The protein resides in the secreted. Its function is as follows. Inactive carboxypeptidase that may play a role in cell wall organization and biogenesis. In Arthroderma benhamiae (strain ATCC MYA-4681 / CBS 112371) (Trichophyton mentagrophytes), this protein is Inactive metallocarboxypeptidase ECM14 (ECM14).